The chain runs to 84 residues: Cytochrome b559 subunit alpha (84 aa).

Residues 22–36 (VIHSITIPALFVAGW) form a helical membrane-spanning segment. Heme is bound at residue His24.

This sequence belongs to the PsbE/PsbF family. In terms of assembly, heterodimer of an alpha subunit and a beta subunit. PSII is composed of 1 copy each of membrane proteins PsbA, PsbB, PsbC, PsbD, PsbE, PsbF, PsbH, PsbI, PsbJ, PsbK, PsbL, PsbM, PsbT, PsbX, PsbY, PsbZ, Psb30/Ycf12, at least 3 peripheral proteins of the oxygen-evolving complex and a large number of cofactors. It forms dimeric complexes. The cofactor is heme b.

Its subcellular location is the plastid. It is found in the chloroplast thylakoid membrane. In terms of biological role, this b-type cytochrome is tightly associated with the reaction center of photosystem II (PSII). PSII is a light-driven water:plastoquinone oxidoreductase that uses light energy to abstract electrons from H(2)O, generating O(2) and a proton gradient subsequently used for ATP formation. It consists of a core antenna complex that captures photons, and an electron transfer chain that converts photonic excitation into a charge separation. The protein is Cytochrome b559 subunit alpha of Porphyra purpurea (Red seaweed).